Consider the following 507-residue polypeptide: ATP synthase subunit alpha, chloroplastic (507 aa).

An ATP-binding site is contributed by 170 to 177 (GDRQTGKT).

It belongs to the ATPase alpha/beta chains family. As to quaternary structure, F-type ATPases have 2 components, CF(1) - the catalytic core - and CF(0) - the membrane proton channel. CF(1) has five subunits: alpha(3), beta(3), gamma(1), delta(1), epsilon(1). CF(0) has four main subunits: a, b, b' and c.

The protein resides in the plastid. It is found in the chloroplast thylakoid membrane. It carries out the reaction ATP + H2O + 4 H(+)(in) = ADP + phosphate + 5 H(+)(out). Its function is as follows. Produces ATP from ADP in the presence of a proton gradient across the membrane. The alpha chain is a regulatory subunit. The sequence is that of ATP synthase subunit alpha, chloroplastic from Populus alba (White poplar).